Here is a 442-residue protein sequence, read N- to C-terminus: Glutamate--methylamine ligase (442 aa).

Residues 13-97 (NQVKYILAQF…IACDGHTHGK (85 aa)) form the GS beta-grasp domain. Residues 103-442 (TRVVLKKQLE…WEVNSYLEFF (340 aa)) enclose the GS catalytic domain.

It belongs to the glutamine synthetase family. Type 3 subfamily. The cofactor is Mg(2+).

The enzyme catalyses methylamine + L-glutamate + ATP = N(5)-methyl-L-glutamine + ADP + phosphate + H(+). Catalyzes the formation of N(5)-methyl-L-glutamine from glutamate and methylamine. In Methyloversatilis universalis (strain ATCC BAA-1314 / DSM 25237 / JCM 13912 / CCUG 52030 / FAM5), this protein is Glutamate--methylamine ligase.